We begin with the raw amino-acid sequence, 343 residues long: Branched-chain-amino-acid aminotransferase (343 aa).

Lys-182 bears the N6-(pyridoxal phosphate)lysine mark.

The protein belongs to the class-IV pyridoxal-phosphate-dependent aminotransferase family. Pyridoxal 5'-phosphate serves as cofactor.

The enzyme catalyses L-leucine + 2-oxoglutarate = 4-methyl-2-oxopentanoate + L-glutamate. It catalyses the reaction L-isoleucine + 2-oxoglutarate = (S)-3-methyl-2-oxopentanoate + L-glutamate. The catalysed reaction is L-valine + 2-oxoglutarate = 3-methyl-2-oxobutanoate + L-glutamate. The protein operates within amino-acid biosynthesis; L-isoleucine biosynthesis; L-isoleucine from 2-oxobutanoate: step 4/4. It participates in amino-acid biosynthesis; L-leucine biosynthesis; L-leucine from 3-methyl-2-oxobutanoate: step 4/4. It functions in the pathway amino-acid biosynthesis; L-valine biosynthesis; L-valine from pyruvate: step 4/4. Acts on leucine, isoleucine and valine. The protein is Branched-chain-amino-acid aminotransferase (ilvE) of Haemophilus influenzae (strain ATCC 51907 / DSM 11121 / KW20 / Rd).